Here is a 166-residue protein sequence, read N- to C-terminus: Regulatory protein RecX (166 aa).

The protein belongs to the RecX family.

It is found in the cytoplasm. Functionally, modulates RecA activity. The protein is Regulatory protein RecX of Shigella boydii serotype 4 (strain Sb227).